The following is a 380-amino-acid chain: Cytochrome b (380 aa).

A run of 4 helical transmembrane segments spans residues 34–54, 78–99, 114–134, and 179–199; these read FGSL…LLAM, WLIR…YFHI, WNTG…GYVL, and FFAL…IHLT. Heme b is bound by residues His-84 and His-98. The heme b site is built by His-183 and His-197. His-202 serves as a coordination point for a ubiquinone. 4 consecutive transmembrane segments (helical) span residues 227-247, 289-309, 321-341, and 348-368; these read LKDI…ALFS, LGGV…PFLH, LSQL…WVGS, and FIII…VLFP.

Belongs to the cytochrome b family. As to quaternary structure, the cytochrome bc1 complex contains 11 subunits: 3 respiratory subunits (MT-CYB, CYC1 and UQCRFS1), 2 core proteins (UQCRC1 and UQCRC2) and 6 low-molecular weight proteins (UQCRH/QCR6, UQCRB/QCR7, UQCRQ/QCR8, UQCR10/QCR9, UQCR11/QCR10 and a cleavage product of UQCRFS1). This cytochrome bc1 complex then forms a dimer. It depends on heme b as a cofactor.

The protein resides in the mitochondrion inner membrane. Functionally, component of the ubiquinol-cytochrome c reductase complex (complex III or cytochrome b-c1 complex) that is part of the mitochondrial respiratory chain. The b-c1 complex mediates electron transfer from ubiquinol to cytochrome c. Contributes to the generation of a proton gradient across the mitochondrial membrane that is then used for ATP synthesis. The polypeptide is Cytochrome b (MT-CYB) (Halobaena caerulea (Blue petrel)).